Consider the following 206-residue polypeptide: Nucleoside triphosphate pyrophosphatase (206 aa).

Catalysis depends on Asp-76, which acts as the Proton acceptor.

The protein belongs to the Maf family. A divalent metal cation is required as a cofactor.

It is found in the cytoplasm. The enzyme catalyses a ribonucleoside 5'-triphosphate + H2O = a ribonucleoside 5'-phosphate + diphosphate + H(+). The catalysed reaction is a 2'-deoxyribonucleoside 5'-triphosphate + H2O = a 2'-deoxyribonucleoside 5'-phosphate + diphosphate + H(+). Its function is as follows. Nucleoside triphosphate pyrophosphatase. May have a dual role in cell division arrest and in preventing the incorporation of modified nucleotides into cellular nucleic acids. This is Nucleoside triphosphate pyrophosphatase from Streptomyces avermitilis (strain ATCC 31267 / DSM 46492 / JCM 5070 / NBRC 14893 / NCIMB 12804 / NRRL 8165 / MA-4680).